The primary structure comprises 380 residues: 3-isopropylmalate dehydratase large subunit 2 (380 aa).

[4Fe-4S] cluster contacts are provided by Cys262, Cys320, and Cys323.

The protein belongs to the aconitase/IPM isomerase family. LeuC type 2 subfamily. In terms of assembly, heterodimer of LeuC and LeuD. It depends on [4Fe-4S] cluster as a cofactor.

The enzyme catalyses (2R,3S)-3-isopropylmalate = (2S)-2-isopropylmalate. It functions in the pathway amino-acid biosynthesis; L-leucine biosynthesis; L-leucine from 3-methyl-2-oxobutanoate: step 2/4. Its function is as follows. Catalyzes the isomerization between 2-isopropylmalate and 3-isopropylmalate, via the formation of 2-isopropylmaleate. This Pyrococcus furiosus (strain ATCC 43587 / DSM 3638 / JCM 8422 / Vc1) protein is 3-isopropylmalate dehydratase large subunit 2.